Here is a 1154-residue protein sequence, read N- to C-terminus: Caspase recruitment domain-containing protein 11 (1154 aa).

Residues 18-110 (EEDALWENVE…ELYKLVTGKE (93 aa)) enclose the CARD domain. The linker stretch occupies residues 111–128 (PTRRFSTIVVEEGHEGLT). Residues 130 to 449 (FLMNEVIKLQ…KDSNNLDQSL (320 aa)) are a coiled coil. 2 positions are modified to phosphoserine: Ser-448 and Ser-466. The inhibitory domain (ID) stretch occupies residues 450 to 666 (PRNLPVTIIS…GHVRGPGPSV (217 aa)). The segment at 460–626 (QDFGDASPRT…HSSSSSHQSE (167 aa)) is disordered. Residues 473-484 (EADDSSTSEESP) are compositionally biased toward acidic residues. Ser-512 is subject to Phosphoserine. Residues 518–529 (RTSDFQAKGHEE) are compositionally biased toward basic and acidic residues. Over residues 534–562 (ASPSSCGSLPITNSFTKMQPPRSRSSIMS) the composition is skewed to polar residues. Phosphoserine is present on Ser-535. Ser-559 is subject to Phosphoserine; by PKC/PRKCB and PKC/PRKCQ. The span at 573 to 587 (IVRRYKEDAPHRSTV) shows a compositional bias: basic and acidic residues. The residue at position 593 (Ser-593) is a Phosphoserine. Low complexity predominate over residues 614-625 (SSIHSSSSSHQS). A phosphoserine; by PKC/PRKCB and PKC/PRKCQ mark is found at Ser-644 and Ser-652. The 89-residue stretch at 667-755 (QHTTLNGDSL…PVTLHYKVNH (89 aa)) folds into the PDZ domain. Phosphoserine is present on residues Ser-886 and Ser-925. The region spanning 973–1140 (RRRPVLFTPT…LLRVVKDKIG (168 aa)) is the Guanylate kinase-like domain.

As to quaternary structure, homodimer; disulfide-linked. Homomultimer; polymerizes following activation, forming a nucleating helical template that seeds BCL10-filament formation via a CARD-CARD interaction. Interacts (via CARD domain) with BCL10 (via CARD domain); interaction takes place following CARD11 activation and polymerization, leading to the formation of a filamentous CBM complex assembly. Component of a CBM complex (CARD11-BCL10-MALT1) complex involved in NF-kappa-B activation. Found in a membrane raft complex, at least composed of BCL10, CARD11, DPP4 and IKBKB. Interacts (via PDZ domain) with DPP4 (via cytoplasmic tail). Post-translationally, phosphorylation at Ser-559, Ser-644 and Ser-652 by PRKCB and PRKCQ leads to a shift from an inactive to an active form that activates the NF-kappa-B signaling. Detected in adult peripheral blood leukocytes, thymus, spleen and liver. Also found in promyelocytic leukemia HL-60 cells, chronic myelogenous leukemia K-562 cells, Burkitt's lymphoma Raji cells and colorectal adenocarcinoma SW480 cells. Not detected in HeLaS3, MOLT-4, A-549 and G431 cells.

It is found in the cytoplasm. The protein localises to the membrane raft. Maintained in an autoinhibited state via homodimerization in which the CARD domain forms an extensive interaction with the adjacent linker and coiled-coil regions. Activation downstream of T-cell receptor (TCR) by phosphorylation by PRKCB and PRKCQ triggers CARD11 homooligomerization and BCL10 recruitment, followed by activation of NF-kappa-B. Adapter protein that plays a key role in adaptive immune response by transducing the activation of NF-kappa-B downstream of T-cell receptor (TCR) and B-cell receptor (BCR) engagement. Transduces signals downstream TCR or BCR activation via the formation of a multiprotein complex together with BCL10 and MALT1 that induces NF-kappa-B and MAP kinase p38 (MAPK11, MAPK12, MAPK13 and/or MAPK14) pathways. Upon activation in response to TCR or BCR triggering, CARD11 homooligomerizes to form a nucleating helical template that recruits BCL10 via CARD-CARD interaction, thereby promoting polymerization of BCL10 and subsequent recruitment of MALT1: this leads to I-kappa-B kinase (IKK) phosphorylation and degradation, and release of NF-kappa-B proteins for nuclear translocation. Its binding to DPP4 induces T-cell proliferation and NF-kappa-B activation in a T-cell receptor/CD3-dependent manner. Promotes linear ubiquitination of BCL10 by promoting the targeting of BCL10 to RNF31/HOIP. Stimulates the phosphorylation of BCL10. Also activates the TORC1 signaling pathway. The polypeptide is Caspase recruitment domain-containing protein 11 (Homo sapiens (Human)).